Here is a 90-residue protein sequence, read N- to C-terminus: Probable Fe(2+)-trafficking protein (90 aa).

It belongs to the Fe(2+)-trafficking protein family. As to quaternary structure, monomer.

Could be a mediator in iron transactions between iron acquisition and iron-requiring processes, such as synthesis and/or repair of Fe-S clusters in biosynthetic enzymes. The polypeptide is Probable Fe(2+)-trafficking protein (Edwardsiella ictaluri (strain 93-146)).